The following is a 136-amino-acid chain: Serine--glyoxylate aminotransferase (136 aa).

Belongs to the class-V pyridoxal-phosphate-dependent aminotransferase family. Homodimer. Pyridoxal 5'-phosphate serves as cofactor. Expressed in leaves but not in root tissue or seedlings.

It is found in the peroxisome. It catalyses the reaction glyoxylate + L-serine = 3-hydroxypyruvate + glycine. The catalysed reaction is glyoxylate + L-alanine = glycine + pyruvate. With respect to regulation, inhibited by aminooxyacetate. The protein is Serine--glyoxylate aminotransferase of Zea mays (Maize).